Consider the following 523-residue polypeptide: L-tyrosine:2-oxoglutarate aminotransferase ucdG (523 aa).

The protein belongs to the class-I pyridoxal-phosphate-dependent aminotransferase family. Homodimer. The cofactor is pyridoxal 5'-phosphate.

Its subcellular location is the cytoplasm. The enzyme catalyses L-tyrosine + 2-oxoglutarate = 3-(4-hydroxyphenyl)pyruvate + L-glutamate. It functions in the pathway secondary metabolite biosynthesis. Nonribosomal peptide synthetase that mediates the biosynthesis of usterphenyllins and uscandidusins, p-terphenyl derivatives. Within the pathway, ucdG is probably involved in the conversion of L-tyrosine into 4-hydroxyphenylpyruvate (HPPA) as a precursor for the usterphenyllin and uscandidusin biosynthesis. UcdE further prenylates position C-14 of ring C of usterphenyllin B to form usterphenyllin A. The pathway begin with the biosynthesis of 4-hydroxyphenylpyruvate (HPPA) from L-tyrosine, possibly by the aminotransferase ucdG. The nonribosomal peptide synthetase ucdA then condenses two HPPA units to produce atromentin. The key step in this pathway is the reduction and dehydration of atromentin to form a terphenyl triol intermediate, performed by the NAD-dependent dehydrogenase ucdB. Further O-methylation by the methyltransferase ucdC forms terphenyllin carrying two methoxy moieties at C-9 and C-12, and subsequent dihydroxylation at C-3 of ring A and C-15 of ring C by the flavin-dependent oxygenase ucdD leads to 3,15-dihydroxyterphenyllin. Prenylation by ucdE at position C-5 of ring A forms usterphenyllin B, and is followed by a second prenylation at position C-14 of ring C to form usterphenyllin A. The following furan ring formation that leads to uscandidusins A and B was proven to be an unexpected spontaneous non-enzymatic reaction. The polypeptide is L-tyrosine:2-oxoglutarate aminotransferase ucdG (Aspergillus ustus).